A 242-amino-acid chain; its full sequence is Uridylate kinase (242 aa).

15–18 contacts ATP; it reads KLSG. The involved in allosteric activation by GTP stretch occupies residues 23–28; the sequence is GDEGFG. UMP is bound at residue glycine 57. Glycine 58 and arginine 62 together coordinate ATP. UMP-binding positions include aspartate 77 and 138–145; that span reads TGNPFCTT. Positions 165, 171, and 174 each coordinate ATP.

It belongs to the UMP kinase family. As to quaternary structure, homohexamer.

The protein resides in the cytoplasm. It catalyses the reaction UMP + ATP = UDP + ADP. Its pathway is pyrimidine metabolism; CTP biosynthesis via de novo pathway; UDP from UMP (UMPK route): step 1/1. Its activity is regulated as follows. Allosterically activated by GTP. Inhibited by UTP. Its function is as follows. Catalyzes the reversible phosphorylation of UMP to UDP. This is Uridylate kinase from Shewanella sp. (strain ANA-3).